Here is a 340-residue protein sequence, read N- to C-terminus: Erlin-2 (340 aa).

The Cytoplasmic portion of the chain corresponds to methionine 1–glutamine 3. Residues leucine 4–histidine 24 traverse the membrane as a helical segment. At lysine 25–asparagine 340 the chain is on the lumenal side. Asparagine 106 carries an N-linked (GlcNAc...) asparagine glycan. The tract at residues glutamate 177–alanine 309 is interaction with ERLIN1. Lysine 267 carries the post-translational modification N6-acetyllysine.

This sequence belongs to the band 7/mec-2 family. Forms a heteromeric complex with ERLIN1. In complex with ERLIN1, interacts with RNF170. Interacts with activated ITPR1, independently of the degree of ITPR1 polyubiquitination. Interacts with SCAP, INSIG1, SREBF1 and SREBF2 under cholesterol sufficiency conditions; indicative for an association with the SCAP-SREBP-INSIG complex. Probably part of an AMFR/gp78 and INSIG1-containing ubiquitin ligase complex involved in ERAD of HMGCR. Interacts with TMUB1; TMUB1 bridges the association with AMFR. Interacts with SYVN1 and RNF139. Interacts with TMEM259. Interacts with TMEM41B. Post-translationally, deubiquitinated by USP25; leading to stabilization.

The protein resides in the endoplasmic reticulum membrane. In terms of biological role, component of the ERLIN1/ERLIN2 complex which mediates the endoplasmic reticulum-associated degradation (ERAD) of inositol 1,4,5-trisphosphate receptors (IP3Rs) such as ITPR1. Promotes sterol-accelerated ERAD of HMGCR probably implicating an AMFR/gp78-containing ubiquitin ligase complex. Involved in regulation of cellular cholesterol homeostasis by regulation the SREBP signaling pathway. May promote ER retention of the SCAP-SREBF complex. In Mus musculus (Mouse), this protein is Erlin-2 (Erlin2).